The following is a 340-amino-acid chain: Ferredoxin--NADP reductase (340 aa).

FAD contacts are provided by Asp-33, Gln-41, Tyr-46, Ala-86, Phe-120, Asp-286, and Thr-327.

Belongs to the ferredoxin--NADP reductase type 2 family. In terms of assembly, homodimer. Requires FAD as cofactor.

The enzyme catalyses 2 reduced [2Fe-2S]-[ferredoxin] + NADP(+) + H(+) = 2 oxidized [2Fe-2S]-[ferredoxin] + NADPH. The chain is Ferredoxin--NADP reductase from Rickettsia rickettsii (strain Sheila Smith).